Consider the following 408-residue polypeptide: Succinylornithine transaminase (408 aa).

At Lys-252 the chain carries N6-(pyridoxal phosphate)lysine.

The protein belongs to the class-III pyridoxal-phosphate-dependent aminotransferase family. AstC subfamily. Pyridoxal 5'-phosphate is required as a cofactor.

The enzyme catalyses N(2)-succinyl-L-ornithine + 2-oxoglutarate = N-succinyl-L-glutamate 5-semialdehyde + L-glutamate. Its pathway is amino-acid degradation; L-arginine degradation via AST pathway; L-glutamate and succinate from L-arginine: step 3/5. In terms of biological role, catalyzes the transamination of N(2)-succinylornithine and alpha-ketoglutarate into N(2)-succinylglutamate semialdehyde and glutamate. Can also act as an acetylornithine aminotransferase. The sequence is that of Succinylornithine transaminase from Salmonella typhi.